The chain runs to 292 residues: MTDTLKLGVPKGSLQNATIELFKRSGWKINVHSRNYFPDINDAEINCAICRAQEMSIYVENGTLDAGLTGKDWIAENQSDVHVVTDLVYSKVSSRPARWVLAVAGDSPVKTLEDLQGAKIATEMVGFTKRYFAERGIDVEVEFSWGATEAKVVSGLADAIVEVTETESTIRAHGLRIIKELMQTNTQLIANKKAWEDPFKQKKINQLAMMLKSALVAETLVGLKMNVPEEKADDVIAILPSLNAPTVSHLYKSTWLSVEIVVDVSVVRDLIPQLLEKGAEGIVEYSLNKVMF.

It belongs to the ATP phosphoribosyltransferase family. Long subfamily. The cofactor is Mg(2+).

It localises to the cytoplasm. It carries out the reaction 1-(5-phospho-beta-D-ribosyl)-ATP + diphosphate = 5-phospho-alpha-D-ribose 1-diphosphate + ATP. It participates in amino-acid biosynthesis; L-histidine biosynthesis; L-histidine from 5-phospho-alpha-D-ribose 1-diphosphate: step 1/9. With respect to regulation, feedback inhibited by histidine. Its function is as follows. Catalyzes the condensation of ATP and 5-phosphoribose 1-diphosphate to form N'-(5'-phosphoribosyl)-ATP (PR-ATP). Has a crucial role in the pathway because the rate of histidine biosynthesis seems to be controlled primarily by regulation of HisG enzymatic activity. In Desulfatibacillum aliphaticivorans, this protein is ATP phosphoribosyltransferase.